A 256-amino-acid chain; its full sequence is uncharacterized protein (256 aa).

A signal peptide spans 1–22; sequence MGYLKRFALYISVMILIFAIAG. The N-palmitoyl cysteine moiety is linked to residue Cys23. The S-diacylglycerol cysteine moiety is linked to residue Cys23.

The protein belongs to the staphylococcal tandem lipoprotein family.

It is found in the cell membrane. This is an uncharacterized protein from Staphylococcus aureus (strain COL).